Here is a 198-residue protein sequence, read N- to C-terminus: MPFYFRKECPLNSGYLRKNRPEKPDGRRAVLRSQVLELHGISHGSAGARSIATMATRRGYQMGRWLAGRLMKELGLVSCQQPTHRYKRGGHEHVAIPNYLERQFAVTEPNQVWCGDVTYIWTGKRWAYLAVVLDLFARKPVGWAMSFSPDSRLTMKALEMAWETRGKPVGVMFQAIKAVIIRAGSSGSYCGDTGSGRV.

Positions 105–198 (AVTEPNQVWC…YCGDTGSGRV (94 aa)) constitute an Integrase catalytic domain.

In terms of biological role, involved in the transposition of the insertion sequence IS911B. This Escherichia coli (strain K12) protein is Putative transposase InsO for insertion sequence element IS911B (insO2).